We begin with the raw amino-acid sequence, 64 residues long: MLAYQARVKEEYDQLMLKINALSKFLESAKFLTVSAVEQELLLSQFISMKSYAECLEKRIAQFK.

This is an uncharacterized protein from Enterobacteria phage T4 (Bacteriophage T4).